The primary structure comprises 627 residues: (-)-beta-pinene synthase 1, chloroplastic (627 aa).

The transit peptide at 1–50 directs the protein to the chloroplast; it reads MDLISVLPSTSKSCVCLHKPLSSSTHKLKPFCRTIRILGMPRPRKSVLMA. Positions 378, 382, and 530 each coordinate Mg(2+). Residues 378 to 382 carry the DDXXD motif motif; sequence DDMYD.

This sequence belongs to the terpene synthase family. Tpsd subfamily. Mg(2+) serves as cofactor. The cofactor is Mn(2+).

It is found in the plastid. It localises to the chloroplast. The catalysed reaction is (2E)-geranyl diphosphate = (1S,5S)-beta-pinene + diphosphate. It catalyses the reaction (2E)-geranyl diphosphate = (1S,5S)-alpha-pinene + diphosphate. Its pathway is terpene metabolism; oleoresin biosynthesis. It functions in the pathway secondary metabolite biosynthesis; terpenoid biosynthesis. Monoterpene synthase (TPS) involved in the biosynthesis of monoterpene natural products included in conifer oleoresin secretions and volatile emissions; these compounds contribute to biotic and abiotic stress defense against herbivores and pathogens. Catalyzes the conversion of (2E)-geranyl diphosphate (GPP) to (-)-beta-pinene and, to a lower extent, to (-)-alpha-pinene. The sequence is that of (-)-beta-pinene synthase 1, chloroplastic from Pinus contorta (Shore pine).